Reading from the N-terminus, the 440-residue chain is Oligodendrocyte-myelin glycoprotein (440 aa).

A signal peptide spans Met-1–Cys-24. Residues Ile-25–Glu-55 enclose the LRRNT domain. Residues Asn-45 and Asn-61 are each glycosylated (N-linked (GlcNAc...) asparagine). LRR repeat units lie at residues Asn-56–Thr-78, Asn-79–Ser-100, Leu-101–Tyr-121, Asn-124–Leu-145, Ser-147–Lys-168, Leu-169–Asn-189, Asn-192–Gln-213, and Gln-216–Leu-239. Asn-103 carries N-linked (GlcNAc...) asparagine glycosylation. Residues Asn-152, Asn-176, Asn-189, Asn-192, and Asn-234 are each glycosylated (N-linked (GlcNAc...) asparagine). 5 Ser/Thr-rich repeats span residues Cys-229–Pro-270, Pro-271–Leu-292, Ser-293–Pro-335, Glu-336–Pro-377, and Val-378–Pro-416. Residues Asn-364 and Asn-389 are each glycosylated (N-linked (GlcNAc...) asparagine). Ser-417 is lipidated: GPI-anchor amidated serine. A propeptide spans Ala-418–Gly-440 (removed in mature form). N-linked (GlcNAc...) asparagine glycosylation occurs at Asn-425.

Binds to RTN4R. In terms of processing, O-glycosylated in its Ser/Thr-rich repeat domain. As to expression, oligodendrocytes and myelin of the central nervous system.

The protein localises to the cell membrane. Functionally, cell adhesion molecule contributing to the interactive process required for myelination in the central nervous system. This Mus musculus (Mouse) protein is Oligodendrocyte-myelin glycoprotein (Omg).